A 218-amino-acid polypeptide reads, in one-letter code: GCN5-related N-acetyltransferase 9 (218 aa).

Residues 36–183 (SALLEATGSE…KEVTLEYPVT (148 aa)) enclose the N-acetyltransferase domain. Acetyl-CoA-binding positions include 112–114 (MIA), 120–125 (GKGLGK), 152–154 (NTA), and phenylalanine 159.

The protein belongs to the acetyltransferase family. GNAT subfamily. Oligomer. In terms of tissue distribution, expressed throughout the plant.

It localises to the cytoplasm. The protein localises to the nucleus. The catalysed reaction is an N-terminal L-alpha-aminoacyl-[protein] + acetyl-CoA = N-terminal N(alpha)-acetyl-L-alpha-aminoacyl-[protein] + CoA + H(+). It carries out the reaction L-lysyl-[protein] + acetyl-CoA = N(6)-acetyl-L-lysyl-[protein] + CoA + H(+). Probable protein acetyltransferase with dual specificity triggering both N-alpha-acetylation (NTA) and epsilon-lysine acetylation (KA). In Arabidopsis thaliana (Mouse-ear cress), this protein is GCN5-related N-acetyltransferase 9.